Here is a 90-residue protein sequence, read N- to C-terminus: Progonadoliberin-3 (90 aa).

The N-terminal stretch at 1-23 (MEASSRVTVQVLLLALVVQVTLS) is a signal peptide. Gln24 carries the post-translational modification Pyrrolidone carboxylic acid. Gly33 carries the glycine amide modification.

It belongs to the GnRH family.

It is found in the secreted. In terms of biological role, stimulates the secretion of gonadotropins. The sequence is that of Progonadoliberin-3 (gnrh3) from Sparus aurata (Gilthead sea bream).